The primary structure comprises 335 residues: Glyceraldehyde-3-phosphate dehydrogenase 1 (335 aa).

Residues 13 to 14 (TI) and Gly-111 each bind NAD(+). 140–142 (SCN) serves as a coordination point for D-glyceraldehyde 3-phosphate. Cys-141 acts as the Nucleophile in catalysis. Residue Arg-169 participates in NAD(+) binding. D-glyceraldehyde 3-phosphate contacts are provided by residues Thr-171 and 195-196 (HG). Gln-300 contacts NAD(+).

It belongs to the glyceraldehyde-3-phosphate dehydrogenase family. As to quaternary structure, homotetramer.

The protein resides in the cytoplasm. It carries out the reaction D-glyceraldehyde 3-phosphate + phosphate + NADP(+) = (2R)-3-phospho-glyceroyl phosphate + NADPH + H(+). It catalyses the reaction D-glyceraldehyde 3-phosphate + phosphate + NAD(+) = (2R)-3-phospho-glyceroyl phosphate + NADH + H(+). It functions in the pathway carbohydrate degradation; glycolysis; pyruvate from D-glyceraldehyde 3-phosphate: step 1/5. The sequence is that of Glyceraldehyde-3-phosphate dehydrogenase 1 (gapA) from Methanosarcina acetivorans (strain ATCC 35395 / DSM 2834 / JCM 12185 / C2A).